A 906-amino-acid polypeptide reads, in one-letter code: Ectonucleotide pyrophosphatase/phosphodiesterase family member 1 (906 aa).

Residues 1–25 (MERDGEQAGQGPRHGPAGNGRELES) are disordered. Residues 1-58 (MERDGEQAGQGPRHGPAGNGRELESPAAASLLAPMDLGEEPLEKAERARTAKDPNTYK) are Cytoplasmic-facing. Position 25 is a phosphoserine (serine 25). Positions 27-34 (AAASLLAP) match the Di-leucine motif motif. A helical; Signal-anchor for type II membrane protein membrane pass occupies residues 59–79 (VLSLVLSVCVLTTILGCIFGL). The Extracellular segment spans residues 80 to 906 (KPSCAKEVKS…THLPIFSQED (827 aa)). SMB domains lie at 86 to 126 (EVKS…VEPT) and 127 to 170 (HIWT…QEKK). 10 cysteine pairs are disulfide-bonded: cysteine 90–cysteine 104, cysteine 94–cysteine 122, cysteine 102–cysteine 115, cysteine 108–cysteine 114, cysteine 131–cysteine 148, cysteine 136–cysteine 166, cysteine 146–cysteine 159, cysteine 152–cysteine 158, cysteine 177–cysteine 223, and cysteine 185–cysteine 397. Asparagine 161 is a glycosylation site (N-linked (GlcNAc...) asparagine). The interval 173 to 573 (VEEACETIDA…APNNESHGSL (401 aa)) is phosphodiesterase. Residues aspartate 200, threonine 238, and asparagine 259 each coordinate AMP. Positions 200 and 238 each coordinate Zn(2+). The active-site AMP-threonine intermediate is threonine 238. 2 residues coordinate CMP: threonine 238 and asparagine 259. 2 residues coordinate dTMP: threonine 238 and asparagine 259. GMP-binding residues include threonine 238 and asparagine 259. Threonine 238 bears the Phosphothreonine mark. Residue asparagine 267 is glycosylated (N-linked (GlcNAc...) asparagine). Residues leucine 272, lysine 277, and tyrosine 322 each coordinate GMP. AMP contacts are provided by lysine 277 and tyrosine 322. Lysine 277 and tyrosine 322 together coordinate CMP. Position 322 (tyrosine 322) interacts with dTMP. N-linked (GlcNAc...) asparagine glycosylation is present at asparagine 323. Residue aspartate 358 participates in AMP binding. Zn(2+)-binding residues include aspartate 358, histidine 362, aspartate 405, and histidine 406. Aspartate 358 contributes to the CMP binding site. Residue aspartate 358 coordinates dTMP. A GMP-binding site is contributed by aspartate 358. Histidine 362 provides a ligand contact to 2',3'-cGAMP. An AMP-binding site is contributed by histidine 406. Residue histidine 406 participates in CMP binding. Residue histidine 406 participates in dTMP binding. Histidine 406 serves as a coordination point for GMP. 6 cysteine pairs are disulfide-bonded: cysteine 413–cysteine 512, cysteine 462–cysteine 849, cysteine 596–cysteine 653, cysteine 607–cysteine 707, cysteine 609–cysteine 692, and cysteine 819–cysteine 829. N-linked (GlcNAc...) asparagine glycosylation is present at asparagine 459. Residue serine 514 participates in 2',3'-cGAMP binding. Histidine 517 lines the AMP pocket. Histidine 517 is a Zn(2+) binding site. Histidine 517 serves as a coordination point for CMP. Histidine 517 is a dTMP binding site. Histidine 517 contacts GMP. Asparagine 567 and asparagine 624 each carry an N-linked (GlcNAc...) asparagine glycan. The segment at 579 to 628 (KPIYTPSHPKEESFLSQCPIKSVSSDLGCTCDPSIVPIMDFEKQFNLTTD) is linker. The tract at residues 635–906 (SMTVPNGRPR…THLPIFSQED (272 aa)) is nuclease-like domain. The Ca(2+) site is built by aspartate 781, aspartate 783, aspartate 785, arginine 787, and aspartate 789.

It belongs to the nucleotide pyrophosphatase/phosphodiesterase family. Ectonucleotide pyrophosphatase/phosphodiesterase family member 1: Homodimer. Ectonucleotide pyrophosphatase/phosphodiesterase family member 1: Interacts with INSR; leading to inhibit INSR autophosphorylation and subsequent activation of INSR kinase activity. Ectonucleotide pyrophosphatase/phosphodiesterase family member 1, secreted form: Monomeric. The cofactor is Zn(2+). Post-translationally, the secreted form is produced through cleavage at Lys-85 by intracellular processing.

The protein resides in the cell membrane. The protein localises to the basolateral cell membrane. Its subcellular location is the secreted. The enzyme catalyses Hydrolytically removes 5'-nucleotides successively from the 3'-hydroxy termini of 3'-hydroxy-terminated oligonucleotides.. It carries out the reaction a ribonucleoside 5'-triphosphate + H2O = a ribonucleoside 5'-phosphate + diphosphate + H(+). The catalysed reaction is ATP + H2O = AMP + diphosphate + H(+). It catalyses the reaction UTP + H2O = UMP + diphosphate + H(+). The enzyme catalyses GTP + H2O = GMP + diphosphate + H(+). It carries out the reaction CTP + H2O = CMP + diphosphate + H(+). The catalysed reaction is 2',3'-cGAMP + 2 H2O = GMP + AMP + 2 H(+). It catalyses the reaction P(1),P(4)-bis(5'-adenosyl) tetraphosphate + H2O = AMP + ATP + 2 H(+). The enzyme catalyses 3',5'-cyclic AMP + H2O = AMP + H(+). With respect to regulation, at low concentrations of ATP, a phosphorylated intermediate is formed which inhibits further hydrolysis. Functionally, nucleotide pyrophosphatase that generates diphosphate (PPi) and functions in bone mineralization and soft tissue calcification by regulating pyrophosphate levels. PPi inhibits bone mineralization and soft tissue calcification by binding to nascent hydroxyapatite crystals, thereby preventing further growth of these crystals. Preferentially hydrolyzes ATP, but can also hydrolyze other nucleoside 5' triphosphates such as GTP, CTP and UTP to their corresponding monophosphates with release of pyrophosphate, as well as diadenosine polyphosphates, and also 3',5'-cAMP to AMP. May also be involved in the regulation of the availability of nucleotide sugars in the endoplasmic reticulum and Golgi, and the regulation of purinergic signaling. Inhibits ectopic joint calcification and maintains articular chondrocytes by repressing hedgehog signaling; it is however unclear whether hedgehog inhibition is direct or indirect. Appears to modulate insulin sensitivity. Also involved in melanogenesis. Also able to hydrolyze 2',3'-cGAMP (cyclic GMP-AMP), a second messenger that activates TMEM173/STING and triggers type-I interferon production. 2',3'-cGAMP degradation takes place in the lumen or extracellular space, and not in the cytosol where it is produced; the role of 2',3'-cGAMP hydrolysis is therefore unclear. Not able to hydrolyze the 2',3'-cGAMP linkage isomer 3'-3'-cGAMP. In Rattus norvegicus (Rat), this protein is Ectonucleotide pyrophosphatase/phosphodiesterase family member 1.